Here is a 509-residue protein sequence, read N- to C-terminus: Phosphoglycerate kinase, glycosomal (509 aa).

(2R)-3-phosphoglycerate-binding residues include V32, D33, F34, N35, R48, S70, H71, G73, R74, R224, H260, and R261. G306 contacts ADP. G306 contributes to the CDP binding site. K308 is a binding site for (2R)-3-phosphoglycerate. An AMP-binding site is contributed by K308. D311 serves as a coordination point for CDP. D311 provides a ligand contact to Mg(2+). ADP is bound by residues K312 and G330. K312 serves as a coordination point for AMP. K312 contacts ATP. Residue G330 participates in CDP binding. The AMP site is built by A331 and A403. ATP-binding residues include A331 and A403. ADP-binding residues include A403 and N427. CDP-binding residues include G428 and F433. The ADP site is built by F433, E434, D466, and S467. E434 lines the AMP pocket. ATP contacts are provided by E434, D466, and S467. D466 contacts Mg(2+).

This sequence belongs to the phosphoglycerate kinase family. As to quaternary structure, monomer. Mg(2+) is required as a cofactor.

It is found in the glycosome. It catalyses the reaction (2R)-3-phosphoglycerate + ATP = (2R)-3-phospho-glyceroyl phosphate + ADP. Its pathway is carbohydrate degradation; glycolysis; pyruvate from D-glyceraldehyde 3-phosphate: step 2/5. This chain is Phosphoglycerate kinase, glycosomal (56PGK), found in Trypanosoma congolense.